The sequence spans 108 residues: MLGPSCFPMISCMNTEEISLLSNNLFTMIFPLRKCGFSSDVECQFNIFFQTLSSVTSKSIIYTLIKVNRSSRSWIAKSEFITTLILQQFKFTTFLFKVHRKKVPGCTI.

This is an uncharacterized protein from Saccharomyces cerevisiae (strain ATCC 204508 / S288c) (Baker's yeast).